A 317-amino-acid polypeptide reads, in one-letter code: Malate dehydrogenase (317 aa).

NAD(+) contacts are provided by residues 10-15 and D34; that span reads GGGQIG. Residues R83 and R89 each coordinate substrate. NAD(+) is bound by residues N96 and 119–121; that span reads ISN. Substrate is bound by residues N121 and R152. H176 acts as the Proton acceptor in catalysis.

The protein belongs to the LDH/MDH superfamily. MDH type 3 family.

The catalysed reaction is (S)-malate + NAD(+) = oxaloacetate + NADH + H(+). Catalyzes the reversible oxidation of malate to oxaloacetate. The chain is Malate dehydrogenase from Citrifermentans bemidjiense (strain ATCC BAA-1014 / DSM 16622 / JCM 12645 / Bem) (Geobacter bemidjiensis).